We begin with the raw amino-acid sequence, 242 residues long: DNA repair protein RecO (242 aa).

The protein belongs to the RecO family. In terms of assembly, monomer.

In terms of biological role, involved in DNA repair and RecF pathway recombination. The protein is DNA repair protein RecO of Shigella sonnei (strain Ss046).